A 305-amino-acid polypeptide reads, in one-letter code: Aquaporin-1 (305 aa).

The disordered stretch occupies residues 1–34 (MSSNDSNDTDKQHTRLDPTGVDDAYIPPEQPETK). The Cytoplasmic portion of the chain corresponds to 1–48 (MSSNDSNDTDKQHTRLDPTGVDDAYIPPEQPETKHHRFKISKDTLRNH). The chain crosses the membrane as a helical span at residues 49–69 (FIAAAGEFCGTFMFLWCAYVI). Topologically, residues 70–91 (CNVANHDVALVAAPDGSHPGQL) are extracellular. Residues 92–112 (IMIAIGFGFSVMFSIWCFAGV) traverse the membrane as a helical segment. Residues 113-136 (SGGALNPAMSLSLCLARAVSPTRC) lie on the Cytoplasmic side of the membrane. An NPA 1 motif is present at residues 118-120 (NPA). The chain crosses the membrane as a helical span at residues 137-157 (VVMWVSQIVAGMAAGGAASAM). The Extracellular portion of the chain corresponds to 158-176 (TPGEVLFANSLGLGCSRTR). A helical transmembrane segment spans residues 177-197 (GLFLEMFGTAILCLTVLMTAV). Topologically, residues 198–203 (EKRETN) are cytoplasmic. A helical transmembrane segment spans residues 204–224 (FMAALPIGISLFIAHVALTAY). Over 225–248 (TGTGVNPARSLGAAVAARYFPHYH) the chain is Extracellular. The NPA 2 motif lies at 230–232 (NPA). Residues 249-269 (WIYWIGTLLGSILAWSVWQLL) form a helical membrane-spanning segment. Topologically, residues 270 to 305 (QILDYTTYVTAEKAASTKEKAQKKGETSSSSAVAEV) are cytoplasmic. Residues 286–295 (TKEKAQKKGE) are compositionally biased toward basic and acidic residues. Positions 286-305 (TKEKAQKKGETSSSSAVAEV) are disordered. The segment covering 296 to 305 (TSSSSAVAEV) has biased composition (polar residues).

The protein belongs to the MIP/aquaporin (TC 1.A.8) family.

It localises to the endoplasmic reticulum membrane. It is found in the cell membrane. In terms of biological role, water channel required to facilitate the transport of water across membranes. Involved in sporulation, freeze tolerance and osmotolerance. Is non-functional in most laboratory strains. This chain is Aquaporin-1 (AQY1), found in Saccharomyces cerevisiae (strain YJM789) (Baker's yeast).